A 151-amino-acid chain; its full sequence is Transcriptional repressor NrdR (151 aa).

Residues Cys3–Cys34 fold into a zinc finger. The 91-residue stretch at Leu49–Asp139 folds into the ATP-cone domain.

The protein belongs to the NrdR family. It depends on Zn(2+) as a cofactor.

Negatively regulates transcription of bacterial ribonucleotide reductase nrd genes and operons by binding to NrdR-boxes. The protein is Transcriptional repressor NrdR of Desulfosudis oleivorans (strain DSM 6200 / JCM 39069 / Hxd3) (Desulfococcus oleovorans).